A 221-amino-acid chain; its full sequence is Protein FixW (221 aa).

One can recognise a Thioredoxin domain in the interval 5–156 (LNLGSPAPPI…LPKVIDGNWR (152 aa)). Cys43 and Cys46 form a disulfide bridge.

It belongs to the thioredoxin family.

In Rhizobium leguminosarum, this protein is Protein FixW (fixW).